The chain runs to 238 residues: Large ribosomal subunit protein uL3 (238 aa).

This sequence belongs to the universal ribosomal protein uL3 family. As to quaternary structure, part of the 50S ribosomal subunit. Forms a cluster with proteins L14 and L19.

Functionally, one of the primary rRNA binding proteins, it binds directly near the 3'-end of the 23S rRNA, where it nucleates assembly of the 50S subunit. The protein is Large ribosomal subunit protein uL3 of Mesoplasma florum (strain ATCC 33453 / NBRC 100688 / NCTC 11704 / L1) (Acholeplasma florum).